The sequence spans 86 residues: Anti-adapter protein IraP (86 aa).

The stretch at 1–36 forms a coiled coil; that stretch reads MKNLIAELLFKLAQKEEESKELCAQVEALEIIVTAM.

It belongs to the IraP family. Interacts with RssB.

It localises to the cytoplasm. Inhibits RpoS proteolysis by regulating RssB activity, thereby increasing the stability of the sigma stress factor RpoS especially during phosphate starvation, but also in stationary phase and during nitrogen starvation. Its effect on RpoS stability is due to its interaction with RssB, which probably blocks the interaction of RssB with RpoS, and the consequent delivery of the RssB-RpoS complex to the ClpXP protein degradation pathway. This Shigella sonnei (strain Ss046) protein is Anti-adapter protein IraP.